The sequence spans 408 residues: Echinulin prenyltransferase 2 (408 aa).

Residues arginine 94, lysine 181, tyrosine 183, arginine 248, lysine 250, tyrosine 252, glutamine 334, tyrosine 336, tyrosine 400, and tyrosine 404 each contribute to the dimethylallyl diphosphate site.

Belongs to the tryptophan dimethylallyltransferase family.

It catalyses the reaction preechinulin + dimethylallyl diphosphate = tardioxopiperazine B + diphosphate. It carries out the reaction preechinulin + dimethylallyl diphosphate = tardioxopiperazine A + diphosphate. The enzyme catalyses tardioxopiperazine A + dimethylallyl diphosphate = echinulin + diphosphate. The catalysed reaction is tardioxopiperazine A + dimethylallyl diphosphate = variecolorin L + diphosphate. It catalyses the reaction neoechinulin A + dimethylallyl diphosphate = variecolorin G + diphosphate. It carries out the reaction neoechinulin A + dimethylallyl diphosphate = isoechinulin A + diphosphate. The enzyme catalyses isoechinulin A + dimethylallyl diphosphate = dehydroechinulin + diphosphate. The catalysed reaction is neoechinulin B + dimethylallyl diphosphate = isoechinulin B + diphosphate. It participates in secondary metabolite biosynthesis. It functions in the pathway alkaloid biosynthesis. In terms of biological role, prenyltransferase; part of the gene cluster that mediates the biosynthesis of echinulin family alkaloid. The pathway begins with the biosynthesis of the cyclic dipeptide cyclo-L-Trp-L-Ala (cyclo-TA) by the NRPS echPS via condensation of L-alanine and L-tryptophan. The prenyltransferase echPT1 then catalyzes the first prenylation step, a reverse prenylation reaction at C2, to yield preechinulin. Preechinulin is the substrate of the cytochrome P450 monooxygenase echP450 that catalyzes the formation of the double bond between C10 and C11 to produce neoechulin A. The unique prenyltransferase echPT2 functions as a competitive enzyme with echP450 for preechinulin metabolization and uses preechinulin for effective regiospecific prenylations. Preechinulin is prenylated by echPT2 at C5 or C7. C7-prenylation leads to accumulation of tardioxopiperazine B without further modification by echPT2. In contrast, the C5-prenylated tardioxopiperazine A can be prenylated again by echPT2, predominantly at C7 to form echinulin or less frequently at C4 to give variecolorin L. EchPT2 also accepts neoechilunin A to produce varlecolorin G (prenylation at C5) or isoechinulin A (prenylation at C7). EchPT2 further converts isoechinulin A into dehydroechinulin. Moreover, a yet unidentified enzyme can also convert neoechilunin A into neoechilunin B by introducing a double bond between positions C14 and C17 and thus provides a further substrate to echPT2 for C5 and C7 prenylation. In Aspergillus ruber (Eurotium rubrum), this protein is Echinulin prenyltransferase 2.